The primary structure comprises 365 residues: Putrescine carbamoyltransferase (365 aa).

Carbamoyl phosphate is bound by residues 54-58 (STRTR), arginine 105, and histidine 132. 277 to 280 (HCLP) contacts putrescine.

The protein belongs to the aspartate/ornithine carbamoyltransferase superfamily. PTCase family. Homotrimer.

The protein resides in the cytoplasm. The enzyme catalyses carbamoyl phosphate + putrescine = N-carbamoylputrescine + phosphate + H(+). The protein operates within amine and polyamine biosynthesis; putrescine biosynthesis via agmatine pathway; putrescine from N-carbamoylputrescine (transferase route): step 1/1. In terms of biological role, catalyzes the phosphorolysis of N-carbamoylputrescine to form carbamoyl phosphate and putrescine. Is involved in the degradation pathway of the polyamine agmatine. In Mycoplasma mycoides subsp. mycoides SC (strain CCUG 32753 / NCTC 10114 / PG1), this protein is Putrescine carbamoyltransferase.